The primary structure comprises 116 residues: Class I hydrophobin 1 (116 aa).

Residues 1-19 (MLFKQAILVATTLTTLAVA) form the signal peptide. 4 disulfides stabilise this stretch: cysteine 35–cysteine 95, cysteine 42–cysteine 89, cysteine 43–cysteine 76, and cysteine 96–cysteine 109. N-linked (GlcNAc...) asparagine glycosylation is found at asparagine 44 and asparagine 100.

It belongs to the fungal hydrophobin family. Self-assembles to form functional amyloid fibrils called rodlets. Self-assembly into fibrillar rodlets occurs spontaneously at hydrophobic:hydrophilic interfaces and the rodlets further associate laterally to form amphipathic monolayers.

The protein resides in the secreted. It is found in the cell wall. In terms of biological role, aerial growth, conidiation, and dispersal of filamentous fungi in the environment rely upon a capability of their secreting small amphipathic proteins called hydrophobins (HPBs) with low sequence identity. Class I can self-assemble into an outermost layer of rodlet bundles on aerial cell surfaces, conferring cellular hydrophobicity that supports fungal growth, development and dispersal; whereas Class II form highly ordered films at water-air interfaces through intermolecular interactions but contribute nothing to the rodlet structure. The sequence is that of Class I hydrophobin 1 from Pleurotus ostreatus (strain PC15) (Oyster mushroom).